The chain runs to 23 residues: Acidic phospholipase A2 CTs-A2 (23 aa).

Requires Ca(2+) as cofactor. Post-translationally, contains 7 disulfide bonds. As to expression, expressed by the venom gland.

It localises to the secreted. The catalysed reaction is a 1,2-diacyl-sn-glycero-3-phosphocholine + H2O = a 1-acyl-sn-glycero-3-phosphocholine + a fatty acid + H(+). Functionally, snake venom phospholipase A2 (PLA2) that shows a moderate inhibition of ADP-induced human platelet aggregation when tested on platelet rich plasma. Exhibits moderate hydrolytic activities and prefers the anionic micelles (dPPC with deoxycholate) to the zwitterionic micelles (dPPC with Triton X-100). PLA2 catalyzes the calcium-dependent hydrolysis of the 2-acyl groups in 3-sn-phosphoglycerides. The sequence is that of Acidic phospholipase A2 CTs-A2 from Trimeresurus stejnegeri (Chinese green tree viper).